An 842-amino-acid chain; its full sequence is Leucine--tRNA ligase (842 aa).

Residues 44-55 (PYPSANGLHVGH) carry the 'HIGH' region motif. The 'KMSKS' region signature appears at 619–623 (KMSKS). Lysine 622 is a binding site for ATP.

The protein belongs to the class-I aminoacyl-tRNA synthetase family.

It is found in the cytoplasm. The catalysed reaction is tRNA(Leu) + L-leucine + ATP = L-leucyl-tRNA(Leu) + AMP + diphosphate. This Borrelia recurrentis (strain A1) protein is Leucine--tRNA ligase.